A 357-amino-acid polypeptide reads, in one-letter code: MAEFIRAQIFGTTFEITSRYSDLQPVGMGAFGLVCSARDQLTNQNVAVKKIMKPFSTPVLAKRTYRELKLLKHLRHENVISLSDIFISPLEDIYFVTELLGTDLHRLLTSRPLEKQFIQYFLYQIMRGLKYVHSAGVVHRDLKPSNILVNENCDLKICDFGLARIQDPQMTGYVSTRYYRAPEIMLTWQKYDVEVDIWSAGCIFAEMLEGKPLFPGKDHVNQFSIITELLGTPPDDVINTIASENTLRFVKSLPKRERQPLKNKFKNADPSAIDLLERMLVFDPKKRITATEALSHDYLAPYHDPTDEPVAEEKFDWSFNDADLPVDTWKIMMYSEILDYHNVDASAQQIEEQFNGQ.

The region spanning 20 to 299 is the Protein kinase domain; that stretch reads YSDLQPVGMG…ATEALSHDYL (280 aa). ATP-binding positions include 26–34 and Lys49; that span reads VGMGAFGLV. Catalysis depends on Asp141, which acts as the Proton acceptor. Residue Thr171 is modified to Phosphothreonine. The TXY motif lies at 171-173; it reads TGY. Residue Tyr173 is modified to Phosphotyrosine.

The protein belongs to the protein kinase superfamily. Ser/Thr protein kinase family. MAP kinase subfamily. HOG1 sub-subfamily. The cofactor is Mg(2+). Post-translationally, dually phosphorylated on Thr-171 and Tyr-173, which activates the enzyme.

It is found in the cytoplasm. The protein localises to the nucleus. The enzyme catalyses L-seryl-[protein] + ATP = O-phospho-L-seryl-[protein] + ADP + H(+). It carries out the reaction L-threonyl-[protein] + ATP = O-phospho-L-threonyl-[protein] + ADP + H(+). With respect to regulation, activated by tyrosine and threonine phosphorylation. In terms of biological role, proline-directed serine/threonine-protein kinase involved in a signal transduction pathway that is activated by changes in the osmolarity of the extracellular environment. Controls osmotic regulation of transcription of target genes. The chain is Mitogen-activated protein kinase HOG1 (HOG1) from Colletotrichum orbiculare (strain 104-T / ATCC 96160 / CBS 514.97 / LARS 414 / MAFF 240422) (Cucumber anthracnose fungus).